A 52-amino-acid chain; its full sequence is NADH dehydrogenase [ubiquinone] 1 alpha subcomplex subunit 4 homolog (52 aa).

Residues 14 to 30 (LYPLGAAVATAVGFATY) traverse the membrane as a helical segment.

The protein belongs to the complex I NDUFA4 subunit family.

The protein resides in the mitochondrion inner membrane. Its function is as follows. Accessory subunit of the mitochondrial membrane respiratory chain NADH dehydrogenase (Complex I), that is believed to be not involved in catalysis. Complex I functions in the transfer of electrons from NADH to the respiratory chain. The immediate electron acceptor for the enzyme is believed to be ubiquinone. In Schizosaccharomyces pombe (strain 972 / ATCC 24843) (Fission yeast), this protein is NADH dehydrogenase [ubiquinone] 1 alpha subcomplex subunit 4 homolog.